A 675-amino-acid chain; its full sequence is Pesticidal crystal protein Cry10Aa (675 aa).

This sequence belongs to the delta endotoxin family.

In terms of biological role, promotes colloidosmotic lysis by binding to the midgut epithelial cells of mosquitos. Active on Aedes aegypti. In Bacillus thuringiensis subsp. israelensis, this protein is Pesticidal crystal protein Cry10Aa (cry10Aa).